The following is a 222-amino-acid chain: MKLHDIDPDNRPRERFLQHGAAALSPAELLALILRSGSQQYNILDTCHHIINRFSLEKLSDVSLKELQQIKGIGESKAMQIVAIFELNRRLHYSRNQLRKIMAAGDVFEYMSGRIPDESKEHLFVLHLNTKNQVIKNELISIGTLNTAVIHPREIFKSAIRESAHSIIVVHNHPSGDVNPSNADKKITNELKQAGAFMQIEMLDHVIMSKTEWYSFRERGLL.

The region spanning 100–222 (KIMAAGDVFE…WYSFRERGLL (123 aa)) is the MPN domain. Zn(2+) contacts are provided by His-171, His-173, and Asp-184. The JAMM motif signature appears at 171 to 184 (HNHPSGDVNPSNAD).

This sequence belongs to the UPF0758 family.

This chain is UPF0758 protein Cag_1513, found in Chlorobium chlorochromatii (strain CaD3).